A 255-amino-acid chain; its full sequence is Very-long-chain (3R)-3-hydroxyacyl-CoA dehydratase 2 (255 aa).

Over 3–42 the chain is Cytoplasmic; it reads AAAAATAAAKGNGGGGGRAGAGDASGTRKKKGPGPLATAY. Residues 11-34 are disordered; it reads AKGNGGGGGRAGAGDASGTRKKKG. Residues 13–22 are compositionally biased toward gly residues; sequence GNGGGGGRAG. The helical transmembrane segment at 43 to 61 threads the bilayer; it reads LVIYNVVMTAGWLVIAVGL. The Lumenal segment spans residues 62-80; sequence VRAYLAKGSYHSLYYSIEK. Residues 81–98 form a helical membrane-spanning segment; it reads PLKFFQTGALLEILHCAI. Over 99-108 the chain is Cytoplasmic; it reads GIVPSSVVLT. A helical transmembrane segment spans residues 109–126; sequence SFQVMSRVFLIWAVTHSV. At 127–131 the chain is on the lumenal side; it reads KEVQS. Residues 132–147 form a helical membrane-spanning segment; it reads EDSVLLFVIAWTITEI. The Cytoplasmic segment spans residues 148 to 170; sequence IRYSFYTFSLLNHLPYLIKWARY. The helical transmembrane segment at 171 to 188 threads the bilayer; the sequence is TLFIVLYPMGVSGELLTI. Residues Tyr-177 and Glu-184 contribute to the active site. Topologically, residues 189 to 218 are lumenal; the sequence is YAALPFVRQAGLYSISLPNKYNFSFDYYAF. The tract at residues 199–215 is may be involved in interaction with TECR; sequence GLYSISLPNKYNFSFDY. N-linked (GlcNAc...) asparagine glycosylation occurs at Asn-210. A helical transmembrane segment spans residues 219-236; that stretch reads LILIMISYIPIFPQLYFH. Residues 237 to 255 lie on the Cytoplasmic side of the membrane; it reads MIHQRRKILSHTEEHKKFE.

It belongs to the very long-chain fatty acids dehydratase HACD family. In terms of assembly, may interact with enzymes of the ELO family (including ELOVL1); with those enzymes that mediate condensation, the first of the four steps of the reaction cycle responsible for fatty acids elongation, may be part of a larger fatty acids elongase complex. Interacts with BCAP31. Interacts (via the third lumenal loop) with TECR.

The protein resides in the endoplasmic reticulum membrane. It catalyses the reaction a very-long-chain (3R)-3-hydroxyacyl-CoA = a very-long-chain (2E)-enoyl-CoA + H2O. The enzyme catalyses (3R)-hydroxyhexadecanoyl-CoA = (2E)-hexadecenoyl-CoA + H2O. It carries out the reaction (3R)-hydroxyoctadecanoyl-CoA = (2E)-octadecenoyl-CoA + H2O. The catalysed reaction is (3R)-hydroxyeicosanoyl-CoA = (2E)-eicosenoyl-CoA + H2O. It catalyses the reaction (3R)-hydroxydocosanoyl-CoA = (2E)-docosenoyl-CoA + H2O. The enzyme catalyses (3R)-hydroxytetracosanoyl-CoA = (2E)-tetracosenoyl-CoA + H2O. It carries out the reaction (3R)-hydroxyhexacosanoyl-CoA = (2E)-hexacosenoyl-CoA + H2O. It functions in the pathway lipid metabolism; fatty acid biosynthesis. Its function is as follows. Catalyzes the third of the very long-chain fatty acids (VLCFA) elongation four-step cycle (condensation, reduction, dehydration, and reduction). This endoplasmic reticulum-elongation process is characterized by the addition of two carbons to the lipid chain through each cycle. This enzyme catalyzes the dehydration of the 3-hydroxyacyl-CoA intermediate into trans-2,3-enoyl-CoA, within each cycle of elongation. Therefore, it participates in the production of various VLCFAs involved in multiple biological processes as precursors of membrane lipids and lipid mediators. The sequence is that of Very-long-chain (3R)-3-hydroxyacyl-CoA dehydratase 2 from Pongo abelii (Sumatran orangutan).